The chain runs to 147 residues: MEQTYVMVKPDGVERGLIGEIVTRIEKKGLKIVAGKLMQIDRELAEKHYAEHIGKSFFEDLIGFITSGPVFAMVLEGDDAIATARRMMGKTNPLEADPGTIRADYAIHTNRNVIHGSDSLESAKREIQLFFAPQEILSYQKAIDTWI.

6 residues coordinate ATP: Lys-9, Phe-57, Arg-85, Thr-91, Arg-102, and Asn-112. Residue His-115 is the Pros-phosphohistidine intermediate of the active site.

The protein belongs to the NDK family. Homotetramer. Mg(2+) is required as a cofactor.

Its subcellular location is the cytoplasm. The enzyme catalyses a 2'-deoxyribonucleoside 5'-diphosphate + ATP = a 2'-deoxyribonucleoside 5'-triphosphate + ADP. It catalyses the reaction a ribonucleoside 5'-diphosphate + ATP = a ribonucleoside 5'-triphosphate + ADP. Major role in the synthesis of nucleoside triphosphates other than ATP. The ATP gamma phosphate is transferred to the NDP beta phosphate via a ping-pong mechanism, using a phosphorylated active-site intermediate. The protein is Nucleoside diphosphate kinase of Listeria monocytogenes serotype 4a (strain HCC23).